Consider the following 358-residue polypeptide: UDP-N-acetylglucosamine--N-acetylmuramyl-(pentapeptide) pyrophosphoryl-undecaprenol N-acetylglucosamine transferase (358 aa).

UDP-N-acetyl-alpha-D-glucosamine is bound by residues 11–13 (TGG), Asn-124, Arg-164, Ser-195, and Gln-291.

This sequence belongs to the glycosyltransferase 28 family. MurG subfamily.

It localises to the cell inner membrane. It carries out the reaction di-trans,octa-cis-undecaprenyl diphospho-N-acetyl-alpha-D-muramoyl-L-alanyl-D-glutamyl-meso-2,6-diaminopimeloyl-D-alanyl-D-alanine + UDP-N-acetyl-alpha-D-glucosamine = di-trans,octa-cis-undecaprenyl diphospho-[N-acetyl-alpha-D-glucosaminyl-(1-&gt;4)]-N-acetyl-alpha-D-muramoyl-L-alanyl-D-glutamyl-meso-2,6-diaminopimeloyl-D-alanyl-D-alanine + UDP + H(+). It functions in the pathway cell wall biogenesis; peptidoglycan biosynthesis. Functionally, cell wall formation. Catalyzes the transfer of a GlcNAc subunit on undecaprenyl-pyrophosphoryl-MurNAc-pentapeptide (lipid intermediate I) to form undecaprenyl-pyrophosphoryl-MurNAc-(pentapeptide)GlcNAc (lipid intermediate II). This chain is UDP-N-acetylglucosamine--N-acetylmuramyl-(pentapeptide) pyrophosphoryl-undecaprenol N-acetylglucosamine transferase, found in Leptospira borgpetersenii serovar Hardjo-bovis (strain JB197).